A 42-amino-acid polypeptide reads, in one-letter code: Tachystatin-B2 (42 aa).

3 cysteine pairs are disulfide-bonded: Cys4–Cys20, Cys11–Cys25, and Cys19–Cys37.

Granular hemocytes, small secretory granules.

It localises to the secreted. Its function is as follows. Exhibits stronger antimicrobial activity against the Gram-positive bacteria (S.aureus (IC(50) is 7.4 ug/ml)) and fungi (C.albicans (IC(50) is 3.0 ug/ml) and P.pastoris (IC(50) is 0.1 ug/ml)) than Gram-negative bacteria (E.coli no inhibition at 100 ug/ml). Binds to chitin (4.3 uM are required to obtain 50% of binding). Does not cause hemolysis on sheep erythrocytes. Has no blocking activity on the P-type calcium channel. This is Tachystatin-B2 from Tachypleus tridentatus (Japanese horseshoe crab).